Reading from the N-terminus, the 147-residue chain is uncharacterized protein (147 aa).

A helical transmembrane segment spans residues 3 to 23 (APMVGMVVLVVTLGAAVLALS).

It to M.tuberculosis Rv1312.

The protein localises to the membrane. This is an uncharacterized protein from Mycobacterium leprae (strain TN).